Consider the following 234-residue polypeptide: Small ribosomal subunit protein eS4 (234 aa).

Residues 37–99 enclose the S4 RNA-binding domain; the sequence is VPLLIVLRDV…REEYYRVFPG (63 aa).

This sequence belongs to the eukaryotic ribosomal protein eS4 family.

This chain is Small ribosomal subunit protein eS4 (rps4e), found in Haloarcula marismortui (strain ATCC 43049 / DSM 3752 / JCM 8966 / VKM B-1809) (Halobacterium marismortui).